The sequence spans 129 residues: NADH-quinone oxidoreductase subunit A (129 aa).

Helical transmembrane passes span 9 to 29 (FPIG…LGLA), 68 to 88 (LLFI…VLLL), and 97 to 117 (LGWP…AGLV).

Belongs to the complex I subunit 3 family. As to quaternary structure, NDH-1 is composed of 14 different subunits. Subunits NuoA, H, J, K, L, M, N constitute the membrane sector of the complex.

The protein localises to the cell inner membrane. The catalysed reaction is a quinone + NADH + 5 H(+)(in) = a quinol + NAD(+) + 4 H(+)(out). Its function is as follows. NDH-1 shuttles electrons from NADH, via FMN and iron-sulfur (Fe-S) centers, to quinones in the respiratory chain. The immediate electron acceptor for the enzyme in this species is believed to be ubiquinone. Couples the redox reaction to proton translocation (for every two electrons transferred, four hydrogen ions are translocated across the cytoplasmic membrane), and thus conserves the redox energy in a proton gradient. The sequence is that of NADH-quinone oxidoreductase subunit A from Anaeromyxobacter dehalogenans (strain 2CP-C).